Consider the following 199-residue polypeptide: NAD(P)H dehydrogenase (quinone) (199 aa).

The region spanning 4 to 190 is the Flavodoxin-like domain; sequence VLVLYYSAYG…AGARYQGKTI (187 aa). Residues 10–15 and 78–80 contribute to the FMN site; these read SAYGHI and TRF. Y12 is an NAD(+) binding site. W98 lines the substrate pocket. Residues 113–119 and H134 contribute to the FMN site; that span reads STATQHG.

It belongs to the WrbA family. FMN is required as a cofactor.

The enzyme catalyses a quinone + NADH + H(+) = a quinol + NAD(+). The catalysed reaction is a quinone + NADPH + H(+) = a quinol + NADP(+). This is NAD(P)H dehydrogenase (quinone) from Rhodopseudomonas palustris (strain HaA2).